Reading from the N-terminus, the 111-residue chain is MIWLTLVFASLLSVAGQLCQKQATCFVAINKRRKHIVLWLGLALACLGLAMVLWLLVLQNVPVGIAYPMLSLNFVWVTLAAVKLWHEPVSPRHWCGVAFIIGGIVILGSTV.

Residues 1-35 are Cytoplasmic-facing; it reads MIWLTLVFASLLSVAGQLCQKQATCFVAINKRRKH. A helical membrane pass occupies residues 36 to 56; sequence IVLWLGLALACLGLAMVLWLL. The EamA domain occupies 40–109; sequence LGLALACLGL…IIGGIVILGS (70 aa). The Periplasmic portion of the chain corresponds to 57 to 60; the sequence is VLQN. The helical transmembrane segment at 61 to 81 threads the bilayer; the sequence is VPVGIAYPMLSLNFVWVTLAA. Over 82–87 the chain is Cytoplasmic; sequence VKLWHE. A helical transmembrane segment spans residues 88 to 108; sequence PVSPRHWCGVAFIIGGIVILG. Residues 109–111 lie on the Periplasmic side of the membrane; that stretch reads STV.

It belongs to the ArnE family. In terms of assembly, heterodimer of ArnE and ArnF.

The protein resides in the cell inner membrane. It participates in bacterial outer membrane biogenesis; lipopolysaccharide biosynthesis. In terms of biological role, translocates 4-amino-4-deoxy-L-arabinose-phosphoundecaprenol (alpha-L-Ara4N-phosphoundecaprenol) from the cytoplasmic to the periplasmic side of the inner membrane. The sequence is that of Probable 4-amino-4-deoxy-L-arabinose-phosphoundecaprenol flippase subunit ArnE from Escherichia coli (strain ATCC 8739 / DSM 1576 / NBRC 3972 / NCIMB 8545 / WDCM 00012 / Crooks).